Consider the following 258-residue polypeptide: Triosephosphate isomerase (258 aa).

9-11 (NWK) is a binding site for substrate. His-95 serves as the catalytic Electrophile. Glu-167 serves as the catalytic Proton acceptor. Substrate contacts are provided by Gly-173 and Ser-212.

It belongs to the triosephosphate isomerase family. Homodimer.

The protein resides in the cytoplasm. It catalyses the reaction D-glyceraldehyde 3-phosphate = dihydroxyacetone phosphate. It participates in carbohydrate biosynthesis; gluconeogenesis. It functions in the pathway carbohydrate degradation; glycolysis; D-glyceraldehyde 3-phosphate from glycerone phosphate: step 1/1. In terms of biological role, involved in the gluconeogenesis. Catalyzes stereospecifically the conversion of dihydroxyacetone phosphate (DHAP) to D-glyceraldehyde-3-phosphate (G3P). The polypeptide is Triosephosphate isomerase (Blochmanniella pennsylvanica (strain BPEN)).